Reading from the N-terminus, the 490-residue chain is Bifunctional pantoate ligase/cytidylate kinase (490 aa).

1–8 (MGGLHQGH) contacts ATP. The interval 1–253 (MGGLHQGHAR…CGETRLIDHV (253 aa)) is pantoate--beta-alanine ligase. H8 acts as the Proton donor in catalysis. Residue Q35 participates in (R)-pantoate binding. Residue Q35 participates in beta-alanine binding. Residue 124–127 (GEKD) participates in ATP binding. Q130 serves as a coordination point for (R)-pantoate. ATP-binding positions include V153 and 161-164 (ASSR). The tract at residues 254 to 490 (FIMTRSPIVA…AKEIWPTPQG (237 aa)) is cytidylate kinase.

This sequence in the N-terminal section; belongs to the pantothenate synthetase family. In the C-terminal section; belongs to the cytidylate kinase family. Type 1 subfamily.

The protein resides in the cytoplasm. It carries out the reaction (R)-pantoate + beta-alanine + ATP = (R)-pantothenate + AMP + diphosphate + H(+). The catalysed reaction is CMP + ATP = CDP + ADP. The enzyme catalyses dCMP + ATP = dCDP + ADP. It functions in the pathway cofactor biosynthesis; (R)-pantothenate biosynthesis; (R)-pantothenate from (R)-pantoate and beta-alanine: step 1/1. Functionally, catalyzes the condensation of pantoate with beta-alanine in an ATP-dependent reaction via a pantoyl-adenylate intermediate. Its function is as follows. Catalyzes the transfer of a phosphate group from ATP to either CMP or dCMP to form CDP or dCDP and ADP, respectively. The protein is Bifunctional pantoate ligase/cytidylate kinase of Synechococcus sp. (strain WH7803).